Here is an 89-residue protein sequence, read N- to C-terminus: Small ribosomal subunit protein uS15 (89 aa).

A compositionally biased stretch (basic and acidic residues) spans 1–21 (MAITQERKNQLINEFKTHESD). Residues 1 to 24 (MAITQERKNQLINEFKTHESDTGS) form a disordered region.

The protein belongs to the universal ribosomal protein uS15 family. Part of the 30S ribosomal subunit. Forms a bridge to the 50S subunit in the 70S ribosome, contacting the 23S rRNA.

In terms of biological role, one of the primary rRNA binding proteins, it binds directly to 16S rRNA where it helps nucleate assembly of the platform of the 30S subunit by binding and bridging several RNA helices of the 16S rRNA. Its function is as follows. Forms an intersubunit bridge (bridge B4) with the 23S rRNA of the 50S subunit in the ribosome. In Bacillus subtilis (strain 168), this protein is Small ribosomal subunit protein uS15.